Consider the following 350-residue polypeptide: Major allergen Mal f 1 (350 aa).

The signal sequence occupies residues 1–22; it reads MRYSTVLAALALLGTSAVSVLA.

It localises to the secreted. It is found in the cell wall. This Malassezia furfur (Pityriasis versicolor infection agent) protein is Major allergen Mal f 1.